Reading from the N-terminus, the 550-residue chain is MQNRKKILTTCAFPYANGSLHIGHILEHIQADIWVRFNRMIGNEIYFICADDSHGTPIMIKAKKNKISPEKMVFLFYKEHKNDLSKFNISYDNYYLTHSKENYRFCKLIYKLLKRKKLIFSKYISQFYDCKINMFLSDRLIQGKCPECNSEKQYSDNCNICGANYCSTDVINPISILSKSVPIIKKSKHLFFDLPKFEKFLKKWIHSGVLKKENLRKVSEWFKNGLKPWDISRDAPYFGFKIPNEKEKYFYVWLDAPIGYLSTFKNLCDKKEKIFFSEFWDVNSKSEIYQFIGKDVIYFHSLFWPAILHGINLKKPTKLFVHGHVTLNGEKMSKSNGFVIKAKTYLKYCDSDFLRYYFSMKISSCAKDIDFSLSDFMNKVNSNIINKIVNLASRSSSFIDKYFEGYLSYKIENYELYCKFTSLKEKINKYFQSNNISFIIYEIIKLAELANQYFNKKSPWKLTEESKDKRNKLHEISSMGINMFYIIMIYLKPILPNLSKKTEDFLNISLKWENINKPLLYPHLINKFKPLCNRITKSQINYIKRESTIK.

Positions 14-24 (PYANGSLHIGH) match the 'HIGH' region motif. Zn(2+) is bound by residues C145, C148, C158, and C161. The 'KMSKS' region motif lies at 331-335 (KMSKS). Residue K334 participates in ATP binding.

Belongs to the class-I aminoacyl-tRNA synthetase family. MetG type 1 subfamily. As to quaternary structure, monomer. Zn(2+) serves as cofactor.

It localises to the cytoplasm. It carries out the reaction tRNA(Met) + L-methionine + ATP = L-methionyl-tRNA(Met) + AMP + diphosphate. Is required not only for elongation of protein synthesis but also for the initiation of all mRNA translation through initiator tRNA(fMet) aminoacylation. The protein is Methionine--tRNA ligase of Wigglesworthia glossinidia brevipalpis.